The following is a 539-amino-acid chain: uncharacterized protein (539 aa).

The disordered stretch occupies residues Ala-316–Glu-433. Residues His-318–Lys-352 are compositionally biased toward basic residues. Over residues Lys-362–Phe-384 the composition is skewed to basic and acidic residues. The span at Asn-390–Gly-402 shows a compositional bias: polar residues.

This is an uncharacterized protein from Treponema pallidum (strain Nichols).